A 314-amino-acid chain; its full sequence is Ribosomal RNA small subunit methyltransferase H (314 aa).

S-adenosyl-L-methionine-binding positions include 37 to 39, Asp57, Phe83, Asp105, and Gln112; that span reads GGH.

This sequence belongs to the methyltransferase superfamily. RsmH family.

The protein localises to the cytoplasm. The enzyme catalyses cytidine(1402) in 16S rRNA + S-adenosyl-L-methionine = N(4)-methylcytidine(1402) in 16S rRNA + S-adenosyl-L-homocysteine + H(+). Functionally, specifically methylates the N4 position of cytidine in position 1402 (C1402) of 16S rRNA. This chain is Ribosomal RNA small subunit methyltransferase H, found in Thioalkalivibrio sulfidiphilus (strain HL-EbGR7).